A 110-amino-acid polypeptide reads, in one-letter code: uncharacterized protein (110 aa).

A signal peptide spans 1–23; that stretch reads MKRITINIITMFIAAAVISLTGT.

This is an uncharacterized protein from Bacillus subtilis (strain 168).